A 247-amino-acid polypeptide reads, in one-letter code: tRNA (guanine-N(1)-)-methyltransferase (247 aa).

S-adenosyl-L-methionine-binding positions include Gly117 and 136–141 (LGDFVL).

Belongs to the RNA methyltransferase TrmD family. In terms of assembly, homodimer.

The protein localises to the cytoplasm. It catalyses the reaction guanosine(37) in tRNA + S-adenosyl-L-methionine = N(1)-methylguanosine(37) in tRNA + S-adenosyl-L-homocysteine + H(+). Specifically methylates guanosine-37 in various tRNAs. This is tRNA (guanine-N(1)-)-methyltransferase from Myxococcus xanthus (strain DK1622).